Here is a 327-residue protein sequence, read N- to C-terminus: Ribosomal RNA small subunit methyltransferase H (327 aa).

S-adenosyl-L-methionine is bound by residues 41–43, Asp-60, Tyr-87, Asp-108, and Gln-115; that span reads GGH. The tract at residues 292–327 is disordered; that stretch reads AERADEQETLENPRAASARLRAVERLRETTTPGSAR.

This sequence belongs to the methyltransferase superfamily. RsmH family.

Its subcellular location is the cytoplasm. It catalyses the reaction cytidine(1402) in 16S rRNA + S-adenosyl-L-methionine = N(4)-methylcytidine(1402) in 16S rRNA + S-adenosyl-L-homocysteine + H(+). Its function is as follows. Specifically methylates the N4 position of cytidine in position 1402 (C1402) of 16S rRNA. The polypeptide is Ribosomal RNA small subunit methyltransferase H (Kocuria rhizophila (strain ATCC 9341 / DSM 348 / NBRC 103217 / DC2201)).